Reading from the N-terminus, the 324-residue chain is uncharacterized protein (324 aa).

The next 9 helical transmembrane spans lie at 34 to 54, 76 to 96, 103 to 123, 127 to 147, 158 to 178, 198 to 218, 243 to 263, 275 to 295, and 297 to 317; these read MAVL…FYVL, VFMA…NVGL, IYQM…TTLL, IGQL…IVGY, PILG…QFTI, GTYG…FIGS, YVIS…GLAI, LDIA…MESF, and LLQF…HSII.

It localises to the membrane. This is an uncharacterized protein from Schizosaccharomyces pombe (strain 972 / ATCC 24843) (Fission yeast).